The primary structure comprises 105 residues: NADH-quinone oxidoreductase subunit K (105 aa).

The next 3 membrane-spanning stretches (helical) occupy residues 8-28 (VTNGLIFSTLLFVISVAGIII), 33-53 (ILILLMSIELMLLAVNTNFLI), and 65-85 (VFVFFIMAVAAAETAIGLAIV).

Belongs to the complex I subunit 4L family. NDH-1 is composed of 14 different subunits. Subunits NuoA, H, J, K, L, M, N constitute the membrane sector of the complex.

It is found in the cell inner membrane. The enzyme catalyses a quinone + NADH + 5 H(+)(in) = a quinol + NAD(+) + 4 H(+)(out). Its function is as follows. NDH-1 shuttles electrons from NADH, via FMN and iron-sulfur (Fe-S) centers, to quinones in the respiratory chain. The immediate electron acceptor for the enzyme in this species is believed to be ubiquinone. Couples the redox reaction to proton translocation (for every two electrons transferred, four hydrogen ions are translocated across the cytoplasmic membrane), and thus conserves the redox energy in a proton gradient. The chain is NADH-quinone oxidoreductase subunit K from Francisella philomiragia subsp. philomiragia (strain ATCC 25017 / CCUG 19701 / FSC 153 / O#319-036).